Consider the following 319-residue polypeptide: Acetyl-coenzyme A carboxylase carboxyl transferase subunit alpha (319 aa).

The region spanning 32 to 293 (NVDTEVRALE…KAVLLNELEA (262 aa)) is the CoA carboxyltransferase C-terminal domain.

The protein belongs to the AccA family. In terms of assembly, acetyl-CoA carboxylase is a heterohexamer composed of biotin carboxyl carrier protein (AccB), biotin carboxylase (AccC) and two subunits each of ACCase subunit alpha (AccA) and ACCase subunit beta (AccD).

It is found in the cytoplasm. It carries out the reaction N(6)-carboxybiotinyl-L-lysyl-[protein] + acetyl-CoA = N(6)-biotinyl-L-lysyl-[protein] + malonyl-CoA. It functions in the pathway lipid metabolism; malonyl-CoA biosynthesis; malonyl-CoA from acetyl-CoA: step 1/1. Component of the acetyl coenzyme A carboxylase (ACC) complex. First, biotin carboxylase catalyzes the carboxylation of biotin on its carrier protein (BCCP) and then the CO(2) group is transferred by the carboxyltransferase to acetyl-CoA to form malonyl-CoA. The chain is Acetyl-coenzyme A carboxylase carboxyl transferase subunit alpha from Xylella fastidiosa (strain 9a5c).